Reading from the N-terminus, the 119-residue chain is Protein TusC (119 aa).

The protein belongs to the DsrF/TusC family. Heterohexamer, formed by a dimer of trimers. The hexameric TusBCD complex contains 2 copies each of TusB, TusC and TusD. The TusBCD complex interacts with TusE.

The protein localises to the cytoplasm. Functionally, part of a sulfur-relay system required for 2-thiolation of 5-methylaminomethyl-2-thiouridine (mnm(5)s(2)U) at tRNA wobble positions. This is Protein TusC from Buchnera aphidicola subsp. Baizongia pistaciae (strain Bp).